A 285-amino-acid chain; its full sequence is Bifunctional protein FolD (285 aa).

Residues 165–167 and Ser-190 each bind NADP(+); that span reads GRS.

This sequence belongs to the tetrahydrofolate dehydrogenase/cyclohydrolase family. In terms of assembly, homodimer.

The enzyme catalyses (6R)-5,10-methylene-5,6,7,8-tetrahydrofolate + NADP(+) = (6R)-5,10-methenyltetrahydrofolate + NADPH. The catalysed reaction is (6R)-5,10-methenyltetrahydrofolate + H2O = (6R)-10-formyltetrahydrofolate + H(+). It participates in one-carbon metabolism; tetrahydrofolate interconversion. Catalyzes the oxidation of 5,10-methylenetetrahydrofolate to 5,10-methenyltetrahydrofolate and then the hydrolysis of 5,10-methenyltetrahydrofolate to 10-formyltetrahydrofolate. In Burkholderia cenocepacia (strain HI2424), this protein is Bifunctional protein FolD.